The chain runs to 390 residues: Olfactomedin-like protein 3A (390 aa).

The signal sequence occupies residues 1–17 (MRALQLLVLVLSGLVGA). The stretch at 18–91 (QQQALMDYLE…RVDRVEREMD (74 aa)) forms a coiled coil. The region spanning 130 to 386 (DCSDMISSIK…QILYKLQLKK (257 aa)) is the Olfactomedin-like domain. Cys-131 and Cys-313 form a disulfide bridge. An N-linked (GlcNAc...) asparagine glycan is attached at Asn-169.

The protein belongs to the OLFML3 family.

It is found in the secreted. Secreted scaffold protein that plays an essential role in dorsoventral patterning during early development. Stabilizes axial formation by restricting chordin (CHRD) activity on the dorsal side. Acts by facilitating the association between the tolloid proteases and their substrate chordin (CHRD), leading to enhance chordin (CHRD) degradation. This Danio rerio (Zebrafish) protein is Olfactomedin-like protein 3A (olfml3a).